We begin with the raw amino-acid sequence, 625 residues long: Histone promoter control protein 2 (625 aa).

2 disordered regions span residues 1–164 and 295–437; these read MDQK…FAAK and APAE…VSPP. Over residues 11–28 the composition is skewed to low complexity; the sequence is SKSGSKQTKSSGKMQTQT. Polar residues predominate over residues 29–39; that stretch reads DTNAEVLNTDN. Ser47 and Ser49 each carry phosphoserine. Low complexity predominate over residues 83–105; it reads SPSPIIISGSSSTSPSGPSSSST. The segment covering 113–135 has biased composition (polar residues); that stretch reads NRFNKNTVELYQHSPSPVMTTNK. The segment covering 136–154 has biased composition (basic and acidic residues); that stretch reads TDTEEKRQNNRNMDNKNTP. A compositionally biased stretch (polar residues) spans 155 to 164; that stretch reads ERGSSSFAAK. Low complexity-rich tracts occupy residues 305-321 and 330-355; these read SISSVTNSDSNISSSKK and SSSASAILPKPTTTKTSKKAASNSSD. Composition is skewed to polar residues over residues 363–381 and 404–415; these read SNKTTSAIKKESNAGSKLN and GNSTEAKNSTSN. Ser435 is modified (phosphoserine).

It belongs to the HPC2 family. Component of the HIR complex, composed of HIR1, HIR2, HIR3 and HPC2. This complex may consist of one copy of HIR1 and HIR3 and two copies of HIR2 and HPC2. The HIR complex interacts with ASF1. Interacts with RTT106.

It localises to the nucleus. Its subcellular location is the chromosome. Functionally, component of the HIR complex, which functions as a histone chaperone that cooperates with ASF1 to promote replication-independent chromatin assembly. The HIR complex is also required for the periodic repression of three of the four histone gene loci during cell cycle as well as for autogenous regulation of the HTA1-HTB1 locus by H2A and H2B. DNA-binding by the HIR complex may repress transcription by inhibiting nucleosome remodeling by the SWI/SNF complex. The HIR complex may also be required for transcriptional silencing of centromeric, telomeric and mating-type loci in the absence of CAF-1. The chain is Histone promoter control protein 2 (HPC2) from Saccharomyces cerevisiae (strain ATCC 204508 / S288c) (Baker's yeast).